The sequence spans 458 residues: Monomethylamine methyltransferase MtmB3 (458 aa).

Position 202 (Pyl-202) is a non-standard amino acid, pyrrolysine.

This sequence belongs to the monomethylamine methyltransferase family.

The catalysed reaction is Co(I)-[methylamine-specific corrinoid protein] + methylamine + H(+) = methyl-Co(III)-[methylamine-specific corrinoid protein] + NH4(+). The protein operates within one-carbon metabolism; methanogenesis from methylamine. In terms of biological role, catalyzes the transfer of the methyl group from monomethylamine to the corrinoid cofactor of MtmC. The chain is Monomethylamine methyltransferase MtmB3 (mtmB3) from Methanosarcina barkeri (strain Fusaro / DSM 804).